A 369-amino-acid polypeptide reads, in one-letter code: UPF0284 protein sll1500 (369 aa).

The protein belongs to the UPF0284 family.

The chain is UPF0284 protein sll1500 from Synechocystis sp. (strain ATCC 27184 / PCC 6803 / Kazusa).